A 233-amino-acid polypeptide reads, in one-letter code: Type IV secretion system protein PtlE homolog (233 aa).

The chain crosses the membrane as a helical span at residues 42–62 (VAWAALAVTALSLIAIATMLP).

The protein belongs to the virB8 family.

It localises to the cell inner membrane. The chain is Type IV secretion system protein PtlE homolog (ptlE) from Bordetella parapertussis (strain 12822 / ATCC BAA-587 / NCTC 13253).